The sequence spans 171 residues: Peptide deformylase (171 aa).

Cys-92 and His-134 together coordinate Fe cation. Glu-135 is a catalytic residue. Residue His-138 participates in Fe cation binding.

This sequence belongs to the polypeptide deformylase family. Requires Fe(2+) as cofactor.

The catalysed reaction is N-terminal N-formyl-L-methionyl-[peptide] + H2O = N-terminal L-methionyl-[peptide] + formate. Removes the formyl group from the N-terminal Met of newly synthesized proteins. Requires at least a dipeptide for an efficient rate of reaction. N-terminal L-methionine is a prerequisite for activity but the enzyme has broad specificity at other positions. The chain is Peptide deformylase from Polynucleobacter necessarius subsp. necessarius (strain STIR1).